We begin with the raw amino-acid sequence, 423 residues long: Polyglutamylase complex subunit TTLL1 (423 aa).

The region spanning 1–367 (MAGKVKWVTD…NGEIPDCKWN (367 aa)) is the TTL domain. ATP contacts are provided by residues Lys138, 144 to 145 (QG), 181 to 184 (SLYI), and 194 to 196 (KFD). A protein is bound at residue Gln144. Arg220 contacts L-glutamate. 241–242 (TN) provides a ligand contact to ATP. Lys259 is an L-glutamate binding site. 3 residues coordinate Mg(2+): Asp313, Glu326, and Asn328. Lys344 contacts L-glutamate. A disordered region spans residues 391–423 (GADRELRSRQGQSLGPRAGRSRDSGRAVLTTWK).

It belongs to the tubulin polyglutamylase family. As to quaternary structure, part of the neuronal tubulin polyglutamylase complex which contains TPGS1, TPGS2, TTLL1, LRRC49 and NICN1. Interacts with PCM1, CSTPP1 and LRRC49. The cofactor is Mg(2+). In terms of tissue distribution, expressed in a wide range of tissues. Has a stronger expression in heart, brain and testis.

Its subcellular location is the cytoplasm. The protein resides in the cytoskeleton. The protein localises to the cilium basal body. It is found in the cilium axoneme. It localises to the cell projection. Its subcellular location is the cilium. The protein resides in the flagellum. The catalysed reaction is (L-glutamyl)(n)-gamma-L-glutamyl-L-glutamyl-[protein] + L-glutamate + ATP = (L-glutamyl)(n+1)-gamma-L-glutamyl-L-glutamyl-[protein] + ADP + phosphate + H(+). Its function is as follows. Catalytic subunit of a polyglutamylase complex which modifies tubulin, generating side chains of glutamate on the gamma-carboxyl group of specific glutamate residues within the C-terminal tail of tubulin. Probably involved in the side-chain elongation step of the polyglutamylation reaction rather than the initiation step. Modifies both alpha- and beta-tubulins with a preference for the alpha-tail. Unlike most polyglutamylases of the tubulin--tyrosine ligase family, only displays a catalytic activity when in complex with other proteins as it is most likely lacking domains important for autonomous activity. Part of the neuronal tubulin polyglutamylase complex. Mediates cilia and flagella polyglutamylation which is essential for their biogenesis and motility. Involved in respiratory motile cilia function through the regulation of beating asymmetry. Essential for sperm flagella biogenesis, motility and male fertility. Involved in KLF4 glutamylation which impedes its ubiquitination, thereby leading to somatic cell reprogramming, pluripotency maintenance and embryogenesis. The protein is Polyglutamylase complex subunit TTLL1 of Homo sapiens (Human).